Consider the following 94-residue polypeptide: C-X-C motif chemokine 11-1 (94 aa).

A signal peptide spans 1–19 (MKTVTALLLVSLAVVAIEG). 2 disulfide bridges follow: Cys-27-Cys-54 and Cys-29-Cys-71.

It belongs to the intercrine alpha (chemokine CxC) family.

Its subcellular location is the secreted. Its function is as follows. Ligand for cxcr3.2. Chemotactic for macrophages. The sequence is that of C-X-C motif chemokine 11-1 (cxcl11.1) from Danio rerio (Zebrafish).